A 462-amino-acid chain; its full sequence is 3-deoxy-D-manno-octulosonic acid transferase (462 aa).

The helical; Signal-anchor transmembrane segment at 2 to 22 (MLLYYILSFILLPVYFIIIFI) threads the bilayer. One can recognise an RPE1 insert domain in the interval 47-90 (SLLDLQMSVNQEGFKVDTEHKATSYVYIHRNASLMYKLSLERSY). Glu-104 serves as the catalytic Proton acceptor. Residues 308–309 (PR), 349–351 (FGE), and 374–377 (NILE) contribute to the CMP site.

The protein belongs to the glycosyltransferase group 1 family.

Its subcellular location is the cell inner membrane. The catalysed reaction is lipid IVA (E. coli) + CMP-3-deoxy-beta-D-manno-octulosonate = alpha-Kdo-(2-&gt;6)-lipid IVA (E. coli) + CMP + H(+). It functions in the pathway bacterial outer membrane biogenesis; LPS core biosynthesis. Its function is as follows. Involved in lipopolysaccharide (LPS) biosynthesis. Catalyzes the transfer of 3-deoxy-D-manno-octulosonate (Kdo) residue(s) from CMP-Kdo to lipid IV(A), the tetraacyldisaccharide-1,4'-bisphosphate precursor of lipid A. This Rickettsia typhi (strain ATCC VR-144 / Wilmington) protein is 3-deoxy-D-manno-octulosonic acid transferase (waaA).